The sequence spans 114 residues: Biofilm growth-associated repressor (114 aa).

The HTH arsR-type domain occupies 17–111; sequence DMEKRANEVA…ALYTIFCTQE (95 aa). The segment at residues 51 to 74 is a DNA-binding region (H-T-H motif); it reads VGELEQQIGIGQPTLSQQLGVLRE.

Functionally, represses an operon that probably comprises itself, PD_1892, PD_1893, PD_1894 and blh. Binds to a palindromic AT-rich sequence spanning the -10 region of the blh promoter and blocks transcription of the operon. The polypeptide is Biofilm growth-associated repressor (bigR) (Xylella fastidiosa (strain Temecula1 / ATCC 700964)).